Consider the following 394-residue polypeptide: METAENIPCSMLGDNFKEVCAEKVIRFRPPLYKQRYQFVRDLVDRHEPKKVADLGCGDTKLLKLLKIYPCIQLLVGVDINEEKLHSNGHRLSPYLGEFVKPRDLDLTVTLYHGSVVERDSRLLGFDLITCIELIEHLDSDDLARFPEVVFGYLSPAMVVISTPNAEFNPLFPTVTLRDADHKFEWSRMEFQTWASQVANCYNYCVEFTGVGTPPAGSEHVGYCTQIGVFRKNGGKLSEPSASQQRDQHVYKAVYTTSYPSLQQEKVLKFVLVGELLIQVDRLRLRHQRMLREQEKERGPKPWYTDSSPAPHLLLGAVFTEAEKARIENSPKPFCEGEKFYIPLQRLLTYPKLHRLCADEDRMRSLIADSVCLSSDGSAVVVDLHNSWDYRPEDN.

S-adenosyl-L-methionine contacts are provided by aspartate 78 and serine 114. Mg(2+) is bound by residues glutamate 132, glutamate 135, histidine 136, and histidine 181.

It belongs to the methyltransferase superfamily. HEN1 family. Mg(2+) serves as cofactor.

The protein localises to the cytoplasm. The catalysed reaction is small RNA 3'-end nucleotide + S-adenosyl-L-methionine = small RNA 3'-end 2'-O-methylnucleotide + S-adenosyl-L-homocysteine + H(+). Functionally, methyltransferase that adds a 2'-O-methyl group at the 3'-end of piRNAs, a class of 24 to 30 nucleotide RNAs that are generated by a Dicer-independent mechanism and are primarily derived from transposons and other repeated sequence elements. This probably protects the 3'-end of piRNAs from uridylation activity and subsequent degradation. Stabilization of piRNAs is essential for gametogenesis. This is Small RNA 2'-O-methyltransferase (Henmt1) from Rattus norvegicus (Rat).